The chain runs to 384 residues: GTPase Obg (384 aa).

The Obg domain occupies 1–159; the sequence is MKFIDEAKIE…RSLQLELKVL (159 aa). 2 disordered regions span residues 20-46 and 129-149; these read ATSF…GSVW and HFKS…EGET. Residues 33-43 show a composition bias toward gly residues; the sequence is GPDGGDGGKGG. Residues 130 to 143 are compositionally biased toward polar residues; the sequence is FKSSVNRAPKQSTP. The 189-residue stretch at 160–348 folds into the OBG-type G domain; the sequence is ADVGLLGMPN…LVHQINQYLA (189 aa). GTP contacts are provided by residues 166-173, 191-195, 213-216, 284-287, and 329-331; these read GMPNAGKS, FTTLH, DIPG, NKLD, and SAL. Ser-173 and Thr-193 together coordinate Mg(2+).

It belongs to the TRAFAC class OBG-HflX-like GTPase superfamily. OBG GTPase family. In terms of assembly, monomer. The cofactor is Mg(2+).

The protein resides in the cytoplasm. Functionally, an essential GTPase which binds GTP, GDP and possibly (p)ppGpp with moderate affinity, with high nucleotide exchange rates and a fairly low GTP hydrolysis rate; the half-life of the GTP-bound state is about 50 minutes. Plays a role in control of the cell cycle, stress response, ribosome biogenesis and in those bacteria that undergo differentiation, in morphogenesis control. The sequence is that of GTPase Obg from Neisseria gonorrhoeae (strain ATCC 700825 / FA 1090).